Consider the following 262-residue polypeptide: Adenosylcobinamide-GDP ribazoletransferase (262 aa).

8 helical membrane-spanning segments follow: residues 4-21, 37-57, 62-82, 112-132, 141-161, 181-201, 202-222, and 236-256; these read AWSG…IPIR, AFPL…FIFS, LSPL…AGGL, VGAF…LFVF, IFLI…LLIY, YDAH…CAIH, FSVW…VFVA, and DALG…IWLL.

The protein belongs to the CobS family. It depends on Mg(2+) as a cofactor.

The protein localises to the cell membrane. It carries out the reaction alpha-ribazole + adenosylcob(III)inamide-GDP = adenosylcob(III)alamin + GMP + H(+). The catalysed reaction is alpha-ribazole 5'-phosphate + adenosylcob(III)inamide-GDP = adenosylcob(III)alamin 5'-phosphate + GMP + H(+). Its pathway is cofactor biosynthesis; adenosylcobalamin biosynthesis; adenosylcobalamin from cob(II)yrinate a,c-diamide: step 7/7. In terms of biological role, joins adenosylcobinamide-GDP and alpha-ribazole to generate adenosylcobalamin (Ado-cobalamin). Also synthesizes adenosylcobalamin 5'-phosphate from adenosylcobinamide-GDP and alpha-ribazole 5'-phosphate. The chain is Adenosylcobinamide-GDP ribazoletransferase from Geobacillus sp. (strain WCH70).